Consider the following 85-residue polypeptide: MLTPLFAIAPATVTWSPKVALVMIVCNVIAIAVGKATIKHPSEGAKLPNAAFFGGMGHAALLGTTSLGHIIGIGAIQGLAARGVL.

The next 2 membrane-spanning stretches (helical) occupy residues 12-34 (TVTW…IAVG) and 54-76 (GGMG…IGAI).

Belongs to the PsaG/PsaK family.

The protein resides in the cellular thylakoid membrane. This Parasynechococcus marenigrum (strain WH8102) protein is Photosystem I reaction center subunit PsaK.